The sequence spans 411 residues: G1/S-specific cyclin pas1 (411 aa).

Disordered stretches follow at residues 210–253 (LKNQ…PSVL) and 307–326 (SLSKPVSLPPTPSSPKVGVY). Residues 218-252 (PSSSPQTTQDSSPILTMAPSTPVSVGSTPPSTPSV) show a composition bias toward low complexity.

It belongs to the cyclin family.

In terms of biological role, essential for the control of the cell cycle at the G1/S (start) transition. Interacts with the pef1 protein kinase. The pef1/pas1 complex activates the res2/cdc10 complex. This chain is G1/S-specific cyclin pas1 (pas1), found in Schizosaccharomyces pombe (strain 972 / ATCC 24843) (Fission yeast).